The primary structure comprises 436 residues: Glutamyl-tRNA reductase (436 aa).

Substrate is bound by residues 49 to 52 (TCNR), serine 109, 114 to 116 (EGQ), and glutamine 120. The Nucleophile role is filled by cysteine 50. 198 to 203 (GAGRMS) provides a ligand contact to NADP(+).

Belongs to the glutamyl-tRNA reductase family. As to quaternary structure, homodimer.

It carries out the reaction (S)-4-amino-5-oxopentanoate + tRNA(Glu) + NADP(+) = L-glutamyl-tRNA(Glu) + NADPH + H(+). Its pathway is porphyrin-containing compound metabolism; protoporphyrin-IX biosynthesis; 5-aminolevulinate from L-glutamyl-tRNA(Glu): step 1/2. It participates in porphyrin-containing compound metabolism; chlorophyll biosynthesis. Functionally, catalyzes the NADPH-dependent reduction of glutamyl-tRNA(Glu) to glutamate 1-semialdehyde (GSA). The chain is Glutamyl-tRNA reductase from Prochlorococcus marinus (strain AS9601).